The chain runs to 357 residues: Elongation factor Ts (357 aa).

Residues 82–85 form an involved in Mg(2+) ion dislocation from EF-Tu region; the sequence is TDFV.

This sequence belongs to the EF-Ts family.

It localises to the cytoplasm. Associates with the EF-Tu.GDP complex and induces the exchange of GDP to GTP. It remains bound to the aminoacyl-tRNA.EF-Tu.GTP complex up to the GTP hydrolysis stage on the ribosome. This is Elongation factor Ts from Campylobacter jejuni subsp. doylei (strain ATCC BAA-1458 / RM4099 / 269.97).